A 361-amino-acid polypeptide reads, in one-letter code: Replication factor C subunit 3 (361 aa).

Positions 1 to 28 are enriched in low complexity; it reads MAGATAATPMDIDAAAPPPGAAAKGKAP. Positions 1–39 are disordered; the sequence is MAGATAATPMDIDAAAPPPGAAAKGKAPLSSTPGGRAAP. 77–84 contributes to the ATP binding site; sequence YGPPGTGK.

It belongs to the activator 1 small subunits family. As to quaternary structure, heterotetramer of subunits RFC2, RFC3, RFC4 and RFC5 that can form a complex with RFC1. As to expression, expressed in roots, leaves, shoot apical meristem (SAM), flag leaves and panicles.

The protein resides in the nucleus. In terms of biological role, may be involved in DNA replication and thus regulate cell proliferation. This is Replication factor C subunit 3 (RFC3) from Oryza sativa subsp. japonica (Rice).